A 629-amino-acid polypeptide reads, in one-letter code: UvrABC system protein C (629 aa).

In terms of domain architecture, GIY-YIG spans 12 to 91 (DRPGCYLFKD…IKKHKPKYNI (80 aa)). In terms of domain architecture, UVR spans 200–235 (QEVLERLRARMEQAAERLEFERAAELRDQIRAIEKV).

This sequence belongs to the UvrC family. In terms of assembly, interacts with UvrB in an incision complex.

Its subcellular location is the cytoplasm. In terms of biological role, the UvrABC repair system catalyzes the recognition and processing of DNA lesions. UvrC both incises the 5' and 3' sides of the lesion. The N-terminal half is responsible for the 3' incision and the C-terminal half is responsible for the 5' incision. This is UvrABC system protein C from Symbiobacterium thermophilum (strain DSM 24528 / JCM 14929 / IAM 14863 / T).